Here is a 95-residue protein sequence, read N- to C-terminus: Ribonuclease kappa (95 aa).

A run of 2 helical transmembrane segments spans residues 12 to 32 (GLIISVWGIVQLVLMGLFFYI) and 68 to 88 (CWIAACIYVLTLLLSAQQFYM).

It belongs to the RNase K family.

The protein localises to the membrane. Functionally, endoribonuclease. Its function is as follows. (Microbial infection) Required for the initial stages of clathrin-mediated endocytic uptake of a diverse set of flaviviruses, including dengue and West Nile. Not required for clathrin-mediated endocytosis and macropinocytosis. The sequence is that of Ribonuclease kappa from Drosophila melanogaster (Fruit fly).